The primary structure comprises 176 residues: I-Kappa-B like protein G1 (176 aa).

3 ANK repeats span residues Glu-56–Ser-88, Phe-93–Ala-123, and Leu-127–Asp-156.

Belongs to the polydnaviridae I-Kappa-B-like protein family.

Suppresses the host immune response through NF-kappa-B inactivation. Possesses ankyrin repeat domains required for NF-kappa-B binding but lacks the regulatory regions required for dissociation from NF-kappa-B and degradation. Therefore, prevents host NF-kappa-B release and subsequent activation. This is I-Kappa-B like protein G1 (G3) from Microplitis demolitor (Parasitoid wasp).